The following is a 625-amino-acid chain: Chaperone protein HtpG (625 aa).

Residues 1–337 (MSTNQETRGF…TNDLPLNVSR (337 aa)) form an a; substrate-binding region. The tract at residues 338–554 (EILQENKITA…NDEMTTQMAK (217 aa)) is b. A c region spans residues 555-625 (LFAAMGQKAP…FIKRMNKLLG (71 aa)).

Belongs to the heat shock protein 90 family. In terms of assembly, homodimer.

Its subcellular location is the cytoplasm. Molecular chaperone. Has ATPase activity. The sequence is that of Chaperone protein HtpG from Actinobacillus pleuropneumoniae serotype 5b (strain L20).